Consider the following 219-residue polypeptide: NADH-quinone oxidoreductase subunit C (219 aa).

The protein belongs to the complex I 30 kDa subunit family. NDH-1 is composed of 14 different subunits. Subunits NuoB, C, D, E, F, and G constitute the peripheral sector of the complex.

It is found in the cell inner membrane. The enzyme catalyses a quinone + NADH + 5 H(+)(in) = a quinol + NAD(+) + 4 H(+)(out). Functionally, NDH-1 shuttles electrons from NADH, via FMN and iron-sulfur (Fe-S) centers, to quinones in the respiratory chain. The immediate electron acceptor for the enzyme in this species is believed to be ubiquinone. Couples the redox reaction to proton translocation (for every two electrons transferred, four hydrogen ions are translocated across the cytoplasmic membrane), and thus conserves the redox energy in a proton gradient. The sequence is that of NADH-quinone oxidoreductase subunit C from Methylorubrum extorquens (strain PA1) (Methylobacterium extorquens).